The chain runs to 531 residues: Retinoid isomerohydrolase (531 aa).

Cys112 is lipidated: S-palmitoyl cysteine; in membrane form. Fe cation contacts are provided by His180, His241, and His313. Cys329 is lipidated: S-palmitoyl cysteine; in membrane form. His526 contacts Fe cation.

This sequence belongs to the carotenoid oxygenase family. The cofactor is Fe(2+). In terms of processing, palmitoylated. As to expression, retinal pigment epithelium-specific.

The protein localises to the cytoplasm. The protein resides in the cell membrane. It carries out the reaction an all-trans-retinyl ester + H2O = 11-cis-retinol + a fatty acid + H(+). It catalyses the reaction lutein = (3R,3'S)-zeaxanthin. The catalysed reaction is all-trans-retinyl hexadecanoate + H2O = 11-cis-retinol + hexadecanoate + H(+). In terms of biological role, plays important roles in the production of 11-cis retinal and in visual pigment regeneration. Capable of catalyzing the isomerization of lutein to meso-zeaxanthin an eye-specific carotenoid. The sequence is that of Retinoid isomerohydrolase (rpe65a) from Danio rerio (Zebrafish).